Consider the following 549-residue polypeptide: Oxygen-dependent choline dehydrogenase (549 aa).

Residue 4–33 participates in FAD binding; sequence DFVIIGSGSAGSALAYRLSEGGKNSVIVIE. H465 serves as the catalytic Proton acceptor.

Belongs to the GMC oxidoreductase family. Requires FAD as cofactor.

The catalysed reaction is choline + A = betaine aldehyde + AH2. The enzyme catalyses betaine aldehyde + NAD(+) + H2O = glycine betaine + NADH + 2 H(+). It functions in the pathway amine and polyamine biosynthesis; betaine biosynthesis via choline pathway; betaine aldehyde from choline (cytochrome c reductase route): step 1/1. Its function is as follows. Involved in the biosynthesis of the osmoprotectant glycine betaine. Catalyzes the oxidation of choline to betaine aldehyde and betaine aldehyde to glycine betaine at the same rate. The chain is Oxygen-dependent choline dehydrogenase from Rhizobium johnstonii (strain DSM 114642 / LMG 32736 / 3841) (Rhizobium leguminosarum bv. viciae).